We begin with the raw amino-acid sequence, 246 residues long: APPIQSRIIGGRECEKNSHPWQVAIYHYSSFQCGGVLVNPKWVLTAAHCKNDNYEVWLGRHNLFENENTAQFFGVTADFPHPGFNLSLLKXHTKADGKDYSHDLMLLRLQSPAKITDAVKVLELPTQEPELGSTCEASGWGSIEPGPDBFEFPDEIQCVQLTLLQNTFCABAHPBKVTESMLCAGYLPGGKDTCMGDSGGPLICNGMWQGITSWGHTPCGSANKPSIYTKLIFYLDWINDTITENP.

The propeptide occupies 1 to 7; the sequence is APPIQSR. The Peptidase S1 domain maps to 8-243; the sequence is IIGGRECEKN…YLDWINDTIT (236 aa). Disulfide bonds link cysteine 14-cysteine 158, cysteine 33-cysteine 49, cysteine 135-cysteine 204, cysteine 169-cysteine 183, and cysteine 194-cysteine 219. The active-site Charge relay system is histidine 48. A glycan (N-linked (GlcNAc...) asparagine) is linked at asparagine 85. The tract at residues 85 to 104 is kallikrein (autolysis) loop; it reads NLSLLKXHTKADGKDYSHDL. Aspartate 103 functions as the Charge relay system in the catalytic mechanism. The active-site Charge relay system is serine 198. N-linked (GlcNAc...) asparagine glycosylation is present at asparagine 239.

It belongs to the peptidase S1 family. Kallikrein subfamily. Monomer.

The catalysed reaction is Preferential cleavage of Arg-|-Xaa bonds in small molecule substrates. Highly selective action to release kallidin (lysyl-bradykinin) from kininogen involves hydrolysis of Met-|-Xaa or Leu-|-Xaa.. In terms of biological role, glandular kallikreins cleave Met-Lys and Arg-Ser bonds in kininogen to release Lys-bradykinin. The chain is Glandular kallikrein from Sus scrofa (Pig).